The primary structure comprises 741 residues: Catalase-peroxidase 2 (741 aa).

The N-terminal stretch at 1-28 (MQKKRVGKSVVAALAIIAMSAGTVAAWA) is a signal peptide. The segment at residues 107–228 (WHGAGTYRTY…LAATQMGLIY (122 aa)) is a cross-link (tryptophyl-tyrosyl-methioninium (Trp-Tyr) (with M-254)). The Proton acceptor role is filled by H108. Residues 228 to 254 (YVNPEGPNGNPDPVAAAKDIRDAFGRM) constitute a cross-link (tryptophyl-tyrosyl-methioninium (Tyr-Met) (with W-107)). Position 269 (H269) interacts with heme b.

This sequence belongs to the peroxidase family. Peroxidase/catalase subfamily. As to quaternary structure, homodimer or homotetramer. Heme b is required as a cofactor. Post-translationally, formation of the three residue Trp-Tyr-Met cross-link is important for the catalase, but not the peroxidase activity of the enzyme.

It carries out the reaction H2O2 + AH2 = A + 2 H2O. The catalysed reaction is 2 H2O2 = O2 + 2 H2O. Functionally, bifunctional enzyme with both catalase and broad-spectrum peroxidase activity. In Burkholderia ambifaria (strain ATCC BAA-244 / DSM 16087 / CCUG 44356 / LMG 19182 / AMMD) (Burkholderia cepacia (strain AMMD)), this protein is Catalase-peroxidase 2.